The primary structure comprises 73 residues: Large ribosomal subunit protein bL28 (73 aa).

It belongs to the bacterial ribosomal protein bL28 family.

This Anaeromyxobacter sp. (strain Fw109-5) protein is Large ribosomal subunit protein bL28.